We begin with the raw amino-acid sequence, 358 residues long: Tribbles homolog 3 (358 aa).

A disordered region spans residues 1-54 (MRATPLAAPAGSLSRKKRLELDDNLDTERPVQKRARSGPQPRLPPCLLPLSPPT). Positions 1–127 (MRATPLAAPA…KHVARPTEVL (127 aa)) are interaction with DDIT3/CHOP. Serine 12 carries the phosphoserine modification. Over residues 41 to 54 (PRLPPCLLPLSPPT) the composition is skewed to pro residues. A Protein kinase domain is found at 68–316 (LGPYVLLEPE…TGILLHPWLR (249 aa)).

The protein belongs to the protein kinase superfamily. CAMK Ser/Thr protein kinase family. Tribbles subfamily. Interacts with AKT1, AKT2, MAP2K1 and MAP2K7. Interacts with ATF4. Interacts with DDIT3/CHOP and inhibits its interaction with EP300/P300. Interacts with APOBEC3C. Interacts (via N-terminus) with APOBEC3A. Interacts with RELA. In terms of tissue distribution, highest expression in liver, pancreas, peripheral blood leukocytes and bone marrow. Also highly expressed in a number of primary lung, colon and breast tumors. Expressed in spleen, thymus, and prostate and is undetectable in other examined tissues, including testis, ovary, small intestine, colon, leukocyte, heart, brain, placenta, lung, skeletal muscle, and kidney.

It is found in the nucleus. Its function is as follows. Inactive protein kinase which acts as a regulator of the integrated stress response (ISR), a process for adaptation to various stress. Inhibits the transcriptional activity of DDIT3/CHOP and is involved in DDIT3/CHOP-dependent cell death during ER stress. May play a role in programmed neuronal cell death but does not appear to affect non-neuronal cells. Acts as a negative feedback regulator of the ATF4-dependent transcription during the ISR: while TRIB3 expression is promoted by ATF4, TRIB3 protein interacts with ATF4 and inhibits ATF4 transcription activity. Disrupts insulin signaling by binding directly to Akt kinases and blocking their activation. May bind directly to and mask the 'Thr-308' phosphorylation site in AKT1. Interacts with the NF-kappa-B transactivator p65 RELA and inhibits its phosphorylation and thus its transcriptional activation activity. Interacts with MAPK kinases and regulates activation of MAP kinases. Can inhibit APOBEC3A editing of nuclear DNA. In Homo sapiens (Human), this protein is Tribbles homolog 3 (TRIB3).